The following is a 290-amino-acid chain: 1D-myo-inositol 2-acetamido-2-deoxy-alpha-D-glucopyranoside deacetylase (290 aa).

Residues H17, D20, and H150 each coordinate Zn(2+).

Belongs to the MshB deacetylase family. The cofactor is Zn(2+).

It carries out the reaction 1D-myo-inositol 2-acetamido-2-deoxy-alpha-D-glucopyranoside + H2O = 1D-myo-inositol 2-amino-2-deoxy-alpha-D-glucopyranoside + acetate. Functionally, catalyzes the deacetylation of 1D-myo-inositol 2-acetamido-2-deoxy-alpha-D-glucopyranoside (GlcNAc-Ins) in the mycothiol biosynthesis pathway. This chain is 1D-myo-inositol 2-acetamido-2-deoxy-alpha-D-glucopyranoside deacetylase, found in Corynebacterium glutamicum (strain R).